Consider the following 552-residue polypeptide: Dihydroxy-acid dehydratase (552 aa).

Aspartate 78 contributes to the Mg(2+) binding site. Cysteine 119 lines the [2Fe-2S] cluster pocket. Residues aspartate 120 and lysine 121 each coordinate Mg(2+). Lysine 121 is modified (N6-carboxylysine). Cysteine 191 lines the [2Fe-2S] cluster pocket. A Mg(2+)-binding site is contributed by glutamate 442. The active-site Proton acceptor is the serine 468.

It belongs to the IlvD/Edd family. Homodimer. Requires [2Fe-2S] cluster as cofactor. It depends on Mg(2+) as a cofactor.

The catalysed reaction is (2R)-2,3-dihydroxy-3-methylbutanoate = 3-methyl-2-oxobutanoate + H2O. It carries out the reaction (2R,3R)-2,3-dihydroxy-3-methylpentanoate = (S)-3-methyl-2-oxopentanoate + H2O. It functions in the pathway amino-acid biosynthesis; L-isoleucine biosynthesis; L-isoleucine from 2-oxobutanoate: step 3/4. Its pathway is amino-acid biosynthesis; L-valine biosynthesis; L-valine from pyruvate: step 3/4. Functionally, functions in the biosynthesis of branched-chain amino acids. Catalyzes the dehydration of (2R,3R)-2,3-dihydroxy-3-methylpentanoate (2,3-dihydroxy-3-methylvalerate) into 2-oxo-3-methylpentanoate (2-oxo-3-methylvalerate) and of (2R)-2,3-dihydroxy-3-methylbutanoate (2,3-dihydroxyisovalerate) into 2-oxo-3-methylbutanoate (2-oxoisovalerate), the penultimate precursor to L-isoleucine and L-valine, respectively. In Clostridium botulinum (strain Eklund 17B / Type B), this protein is Dihydroxy-acid dehydratase.